Consider the following 27-residue polypeptide: Augerpeptide hhe6.2 (27 aa).

Disulfide bonds link Cys-4/Cys-13, Cys-8/Cys-20, and Cys-12/Cys-27.

As to expression, expressed by the venom duct.

The protein resides in the secreted. This Hastula hectica (Sea snail) protein is Augerpeptide hhe6.2.